A 417-amino-acid polypeptide reads, in one-letter code: Phosphoglycerate kinase 1 (417 aa).

Serine 2 carries the post-translational modification N-acetylserine. Residues serine 2 and serine 4 each carry the phosphoserine modification. At lysine 6 the chain carries N6-succinyllysine. Residue lysine 11 is modified to N6-acetyllysine. Residues valine 23, aspartate 24, phenylalanine 25, asparagine 26, glutamine 38, and arginine 39 each coordinate (2R)-3-phosphoglycerate. Residues 38 to 43 (QRIKAA) form a mitochondrial targeting region exposed following cis-trans isomerization by PIN1 and recognized by the TOM complex for mitochondrial translocation of the protein region. Position 48 is an N6-acetyllysine; alternate (lysine 48). At lysine 48 the chain carries N6-succinyllysine; alternate. The (2R)-3-phosphoglycerate site is built by serine 62, histidine 63, glycine 65, and arginine 66. At lysine 75 the chain carries N6-acetyllysine. Tyrosine 76 carries the phosphotyrosine modification. 2 positions are modified to N6-acetyllysine: lysine 86 and lysine 91. Lysine 97 is modified (N6-acetyllysine; alternate). An N6-(2-hydroxyisobutyryl)lysine; alternate modification is found at lysine 97. Leucine 122 and arginine 123 together coordinate (2R)-3-phosphoglycerate. Lysine 131 is modified (N6-acetyllysine; alternate). Residue lysine 131 is modified to N6-malonyllysine; alternate. N6-acetyllysine is present on lysine 146. (2R)-3-phosphoglycerate is bound by residues histidine 170 and arginine 171. An N6-succinyllysine modification is found at lysine 191. Tyrosine 196 bears the Phosphotyrosine mark. Residue lysine 199 is modified to N6-acetyllysine. Position 203 is a phosphoserine (serine 203). Position 214 (glycine 214) interacts with ADP. Glycine 214 serves as a coordination point for CDP. Residues alanine 215 and lysine 216 each contribute to the AMP site. Residue alanine 215 coordinates ATP. Residue alanine 215 participates in Mg(2+) binding. The residue at position 216 (lysine 216) is an N6-(2-hydroxyisobutyryl)lysine. Mg(2+) contacts are provided by alanine 218 and aspartate 219. Aspartate 219 is a binding site for CDP. AMP is bound at residue lysine 220. Lysine 220 lines the ATP pocket. Position 220 is an N6-(2-hydroxyisobutyryl)lysine (lysine 220). Glycine 238 provides a ligand contact to ADP. Glycine 238 provides a ligand contact to CDP. Glycine 239 is an AMP binding site. An ATP-binding site is contributed by glycine 239. 2 positions are modified to N6-acetyllysine: lysine 267 and lysine 291. Glycine 313 lines the AMP pocket. Glycine 313 is an ATP binding site. At lysine 323 the chain carries N6-(2-hydroxyisobutyryl)lysine. Glycine 338, valine 340, and phenylalanine 343 together coordinate CDP. Phenylalanine 343 lines the ADP pocket. Position 344 (glutamate 344) interacts with AMP. Glutamate 344 contacts ATP. Lysine 361 carries the N6-acetyllysine modification. ATP-binding residues include aspartate 375 and threonine 376. A Mg(2+)-binding site is contributed by aspartate 375.

The protein belongs to the phosphoglycerate kinase family. As to quaternary structure, monomer. Interacts with kinase MAPK1/ERK2; the interaction is direct, occurs under hypoxic conditions, and promotes its interaction with PIN1. Interacts with peptidyl-prolyl cis-trans isomerase PIN1; the interaction is direct, occurs under hypoxic conditions, and targets the protein to the mitochondrion by promoting interactions with the TOM complex. Interacts with mitochondrial circRNA mcPGK1 (via its 2nd stem-loop); the interaction is direct and targets the protein to the mitochondrion by promoting interactions with the TOM complex. Interacts with pyruvate dehydrogenase kinase PDK1; the interaction is direct, occurs under hypoxic conditions and leads to PDK1-mediated inhibition of pyruvate dehydrogenase complex activity. Mg(2+) is required as a cofactor. Post-translationally, phosphorylated at Ser-203 by MAPK1/ERK2 under hypoxic conditions, which promotes its mitochondrial targeting.

The protein resides in the cytoplasm. It localises to the cytosol. It is found in the mitochondrion matrix. It catalyses the reaction (2R)-3-phosphoglycerate + ATP = (2R)-3-phospho-glyceroyl phosphate + ADP. The catalysed reaction is L-seryl-[protein] + ATP = O-phospho-L-seryl-[protein] + ADP + H(+). The protein operates within carbohydrate degradation; glycolysis; pyruvate from D-glyceraldehyde 3-phosphate: step 2/5. Catalyzes one of the two ATP producing reactions in the glycolytic pathway via the reversible conversion of 1,3-diphosphoglycerate to 3-phosphoglycerate. Both L- and D- forms of purine and pyrimidine nucleotides can be used as substrates, but the activity is much lower on pyrimidines. In addition to its role as a glycolytic enzyme, it seems that PGK-1 acts as a polymerase alpha cofactor protein (primer recognition protein). Acts as a protein kinase when localized to the mitochondrion where it phosphorylates pyruvate dehydrogenase kinase PDK1 to inhibit pyruvate dehydrogenase complex activity and suppress the formation of acetyl-coenzyme A from pyruvate, and consequently inhibit oxidative phosphorylation and promote glycolysis. May play a role in sperm motility. In Macaca fascicularis (Crab-eating macaque), this protein is Phosphoglycerate kinase 1 (PGK1).